The chain runs to 72 residues: ATP synthase subunit L (72 aa).

In terms of assembly, F-type ATP synthases have 2 components, the catalytic core F(1) and the membrane-embedded component F(0), linked together by a central stalk and a peripheral stalk. The central stalk, also called rotor shaft, is often seen as part of F(1). The peripheral stalk is seen as part of F(0). F(0) contains the membrane channel next to the rotor. F-type ATP synthases form dimers but each monomer functions independently in ATP generation. The dimer consists of 18 different polypeptides: ATP1 (subunit alpha, part of F(1), 3 molecules per monomer), ATP2 (subunit beta, part of F(1), 3 molecules per monomer), ATP3 (subunit gamma, part of the central stalk), ATP4 (subunit b, part of the peripheral stalk), ATP5/OSCP (subunit 5/OSCP, part of the peripheral stalk), ATP6 (subunit a, part of the peripheral stalk), ATP7 (subunit d, part of the peripheral stalk), ATP8 (subunit 8, part of the peripheral stalk), OLI1 (subunit c, part of the rotor, 10 molecules per monomer), ATP14 (subunit h, part of the peripheral stalk), ATP15 (subunit epsilon, part of the central stalk), ATP16 (subunit delta, part of the central stalk), ATP17 (subunit f, part of the peripheral stalk), ATP18 (subunit i/j, part of the peripheral stalk). Dimer-specific subunits are ATP19 (subunit k, at interface between monomers), ATP20 (subunit g, at interface between monomers), TIM11 (subunit e, at interface between monomers). Also contains subunit L.

It localises to the mitochondrion inner membrane. Mitochondrial membrane ATP synthase (F(1)F(0) ATP synthase or Complex V) produces ATP from ADP in the presence of a proton gradient across the membrane which is generated by electron transport complexes of the respiratory chain. F-type ATP synthases consist of two structural domains, F(1) - containing the extramembraneous catalytic core, and F(0) - containing the membrane proton channel, linked together by a central stalk and a peripheral stalk. During catalysis, ATP synthesis in the catalytic domain of F(1) is coupled via a rotary mechanism of the central stalk subunits to proton translocation. The chain is ATP synthase subunit L from Pichia angusta (Yeast).